The following is a 122-amino-acid chain: Ribosome-binding factor A (122 aa).

The protein belongs to the RbfA family. As to quaternary structure, monomer. Binds 30S ribosomal subunits, but not 50S ribosomal subunits or 70S ribosomes.

Its subcellular location is the cytoplasm. One of several proteins that assist in the late maturation steps of the functional core of the 30S ribosomal subunit. Associates with free 30S ribosomal subunits (but not with 30S subunits that are part of 70S ribosomes or polysomes). Required for efficient processing of 16S rRNA. May interact with the 5'-terminal helix region of 16S rRNA. This Cupriavidus necator (strain ATCC 17699 / DSM 428 / KCTC 22496 / NCIMB 10442 / H16 / Stanier 337) (Ralstonia eutropha) protein is Ribosome-binding factor A.